We begin with the raw amino-acid sequence, 265 residues long: Aquaporin-5 (265 aa).

At 1–12 (MKKEVCSLAFLK) the chain is on the cytoplasmic side. The helical transmembrane segment at 13–33 (AVFAEFLATLIFVFFGLASAL) threads the bilayer. The Extracellular portion of the chain corresponds to 34 to 39 (KWPSAL). A helical membrane pass occupies residues 40–60 (PTILQIALAFGLAIGTLAQAL). The Cytoplasmic portion of the chain corresponds to 61 to 65 (GPVSG). The discontinuously helical intramembrane region spans 66–74 (GHINPAITL). The short motif at 69-71 (NPA) is the NPA 1 element. Residues 75–87 (ALLVGNQISLLRA) are Cytoplasmic-facing. A helical membrane pass occupies residues 88-108 (VFYVVAQLVGAIAGAGILYGL). Residues 109-126 (APGNARGNLAVNSLNNNT) lie on the Extracellular side of the membrane. Asparagine 124 is a glycosylation site (N-linked (GlcNAc...) asparagine). The chain crosses the membrane as a helical span at residues 127-147 (TPGQAVVVEMILTFQLALCIF). Residues 148–158 (SSTDSRRTSPV) are Cytoplasmic-facing. A helical transmembrane segment spans residues 159–179 (GSPALSIGLSVTLGHLVGIYF). A topological domain (extracellular) is located at residue threonine 180. Residues 181 to 191 (GCSMNPARSFG) constitute an intramembrane region (discontinuously helical). Positions 185–187 (NPA) match the NPA 2 motif. Residues 192 to 203 (PAVVMNRFSPSH) are Extracellular-facing. A helical membrane pass occupies residues 204-224 (WVFWVGPIVGAAVAAILYFYL). The Cytoplasmic segment spans residues 225–265 (LFPNSLSLSERVAVVKGTYESEEDWEEQREERKKTMELTAH).

Belongs to the MIP/aquaporin (TC 1.A.8) family. As to quaternary structure, homotetramer; each monomer provides an independent water pore. Interacts with TRPV4; the interaction is probably indirect and regulates TRPV4 activation by hypotonicity.

The protein resides in the apical cell membrane. The protein localises to the cell membrane. It localises to the cytoplasmic vesicle membrane. The catalysed reaction is H2O(in) = H2O(out). In terms of biological role, aquaporins form homotetrameric transmembrane channels, with each monomer independently mediating water transport across the plasma membrane along its osmotic gradient. Plays an important role in fluid secretion in salivary glands. Required for TRPV4 activation by hypotonicity. Together with TRPV4, controls regulatory volume decrease in salivary epithelial cells. Seems to play a redundant role in water transport in the eye, lung and in sweat glands. The protein is Aquaporin-5 of Sus scrofa (Pig).